The chain runs to 237 residues: Ribonuclease PH (237 aa).

Residues arginine 86 and glycine 124–arginine 126 contribute to the phosphate site.

Belongs to the RNase PH family. Homohexameric ring arranged as a trimer of dimers.

The enzyme catalyses tRNA(n+1) + phosphate = tRNA(n) + a ribonucleoside 5'-diphosphate. Phosphorolytic 3'-5' exoribonuclease that plays an important role in tRNA 3'-end maturation. Removes nucleotide residues following the 3'-CCA terminus of tRNAs; can also add nucleotides to the ends of RNA molecules by using nucleoside diphosphates as substrates, but this may not be physiologically important. Probably plays a role in initiation of 16S rRNA degradation (leading to ribosome degradation) during starvation. In Shewanella loihica (strain ATCC BAA-1088 / PV-4), this protein is Ribonuclease PH.